The chain runs to 895 residues: Collagen alpha-1(I) chain (895 aa).

The tract at residues 1 to 895 (GPMGPSGPRG…PGPIGPPGPR (895 aa)) is disordered. Over residues 20-39 (PQGFQGPPGEPGEPGASGPM) the composition is skewed to low complexity. The span at 51–65 (NGDDGEAGKPGRPGE) shows a compositional bias: basic and acidic residues. Position 90 is a phosphoserine (Ser-90). Low complexity-rich tracts occupy residues 98–114 (DAGP…PGEN) and 137–150 (PAGA…TGAA). Residues 152-164 (PPGPTGPAGPPGF) show a composition bias toward pro residues. Low complexity-rich tracts occupy residues 198-237 (AGAA…RGPS), 302-336 (ERGF…PGEA), 348-374 (KGIT…QDGR), 383-399 (ARGQ…KGAA), 553-564 (TGPSGPAGPTGA), and 575-593 (AGFA…KGDA). At Ser-556 the chain carries Phosphoserine. The span at 595 to 607 (PPGPAGPAGPPGP) shows a compositional bias: pro residues. 3 stretches are compositionally biased toward low complexity: residues 608-635 (IGSV…AGRV), 660-669 (ETGPAGRPGE), and 679-703 (AGEK…QGIA). The segment covering 741 to 751 (PPGPVGPPGIA) has biased composition (pro residues). The span at 753 to 768 (PPGESGREGSPGAEGS) shows a compositional bias: low complexity. The span at 787 to 802 (AGPPGAPGAPGAPGPV) shows a compositional bias: pro residues. 2 stretches are compositionally biased toward low complexity: residues 823–838 (IGPV…QGPR) and 853–886 (PGEQ…NGIP).

It belongs to the fibrillar collagen family. As to quaternary structure, trimers of one alpha 2(I) and two alpha 1(I) chains. Prolines at the third position of the tripeptide repeating unit (G-X-Y) are hydroxylated in some or all of the chains. In terms of tissue distribution, forms the fibrils of tendon, ligaments and bones. In bones, the fibrils are mineralized with calcium hydroxyapatite.

It is found in the secreted. Its subcellular location is the extracellular space. It localises to the extracellular matrix. In terms of biological role, type I collagen is a member of group I collagen (fibrillar forming collagen). In Equus sp, this protein is Collagen alpha-1(I) chain.